Consider the following 424-residue polypeptide: Enolase (424 aa).

Glutamine 165 is a (2R)-2-phosphoglycerate binding site. Residue glutamate 207 is the Proton donor of the active site. Positions 244, 283, and 310 each coordinate Mg(2+). (2R)-2-phosphoglycerate contacts are provided by lysine 335, arginine 364, serine 365, and lysine 386. The active-site Proton acceptor is lysine 335.

Belongs to the enolase family. Mg(2+) is required as a cofactor.

It is found in the cytoplasm. The protein resides in the secreted. The protein localises to the cell surface. The enzyme catalyses (2R)-2-phosphoglycerate = phosphoenolpyruvate + H2O. It functions in the pathway carbohydrate degradation; glycolysis; pyruvate from D-glyceraldehyde 3-phosphate: step 4/5. In terms of biological role, catalyzes the reversible conversion of 2-phosphoglycerate (2-PG) into phosphoenolpyruvate (PEP). It is essential for the degradation of carbohydrates via glycolysis. This Chlamydia trachomatis serovar D (strain ATCC VR-885 / DSM 19411 / UW-3/Cx) protein is Enolase.